Here is a 102-residue protein sequence, read N- to C-terminus: NADH-quinone oxidoreductase subunit K 1 (102 aa).

3 consecutive transmembrane segments (helical) span residues 3 to 23 (TLTT…LGIL), 29 to 49 (VGML…FMAF), and 62 to 82 (IIAL…LSII).

Belongs to the complex I subunit 4L family. NDH-1 is composed of 14 different subunits. Subunits NuoA, H, J, K, L, M, N constitute the membrane sector of the complex.

Its subcellular location is the cell inner membrane. It carries out the reaction a quinone + NADH + 5 H(+)(in) = a quinol + NAD(+) + 4 H(+)(out). Its function is as follows. NDH-1 shuttles electrons from NADH, via FMN and iron-sulfur (Fe-S) centers, to quinones in the respiratory chain. The immediate electron acceptor for the enzyme in this species is believed to be ubiquinone. Couples the redox reaction to proton translocation (for every two electrons transferred, four hydrogen ions are translocated across the cytoplasmic membrane), and thus conserves the redox energy in a proton gradient. The sequence is that of NADH-quinone oxidoreductase subunit K 1 from Syntrophobacter fumaroxidans (strain DSM 10017 / MPOB).